We begin with the raw amino-acid sequence, 479 residues long: Proline--tRNA ligase 2 (479 aa).

The protein belongs to the class-II aminoacyl-tRNA synthetase family. ProS type 3 subfamily. Homodimer.

The protein resides in the cytoplasm. It catalyses the reaction tRNA(Pro) + L-proline + ATP = L-prolyl-tRNA(Pro) + AMP + diphosphate. Functionally, catalyzes the attachment of proline to tRNA(Pro) in a two-step reaction: proline is first activated by ATP to form Pro-AMP and then transferred to the acceptor end of tRNA(Pro). The sequence is that of Proline--tRNA ligase 2 from Rhodococcus jostii (strain RHA1).